Consider the following 196-residue polypeptide: FMN-dependent NADH:quinone oxidoreductase (196 aa).

Position 10 (serine 10) interacts with FMN.

The protein belongs to the azoreductase type 1 family. In terms of assembly, homodimer. Requires FMN as cofactor.

The catalysed reaction is 2 a quinone + NADH + H(+) = 2 a 1,4-benzosemiquinone + NAD(+). It carries out the reaction N,N-dimethyl-1,4-phenylenediamine + anthranilate + 2 NAD(+) = 2-(4-dimethylaminophenyl)diazenylbenzoate + 2 NADH + 2 H(+). Its function is as follows. Quinone reductase that provides resistance to thiol-specific stress caused by electrophilic quinones. Also exhibits azoreductase activity. Catalyzes the reductive cleavage of the azo bond in aromatic azo compounds to the corresponding amines. The protein is FMN-dependent NADH:quinone oxidoreductase of Cereibacter sphaeroides (strain KD131 / KCTC 12085) (Rhodobacter sphaeroides).